We begin with the raw amino-acid sequence, 89 residues long: Large ribosomal subunit protein bL27 (89 aa).

The disordered stretch occupies residues 1–21 (MAHKKSGGSSSNGRDSESKRL).

It belongs to the bacterial ribosomal protein bL27 family.

The protein is Large ribosomal subunit protein bL27 of Caulobacter vibrioides (strain NA1000 / CB15N) (Caulobacter crescentus).